The sequence spans 304 residues: D-alanine--D-alanine ligase (304 aa).

An ATP-grasp domain is found at 103–301; that stretch reads KQVWLALGLP…FDDLVWRILE (199 aa). ATP is bound at residue 132-187; that stretch reads VEMLGFPVIIKPAKEGSSVGVSRVFALEHLEEAVALAARYEGELLMEQLIEGDELT. Mg(2+) contacts are provided by Asp-254, Glu-268, and Asn-270.

This sequence belongs to the D-alanine--D-alanine ligase family. The cofactor is Mg(2+). It depends on Mn(2+) as a cofactor.

The protein localises to the cytoplasm. It carries out the reaction 2 D-alanine + ATP = D-alanyl-D-alanine + ADP + phosphate + H(+). It functions in the pathway cell wall biogenesis; peptidoglycan biosynthesis. In terms of biological role, cell wall formation. The sequence is that of D-alanine--D-alanine ligase from Xylella fastidiosa (strain Temecula1 / ATCC 700964).